Reading from the N-terminus, the 1140-residue chain is DNA damage-binding protein 1 (1140 aa).

It belongs to the DDB1 family. Component of the UV-DDB complex which includes DDB1 and DDB2; the heterodimer dimerizes to give rise to a heterotetramer when bound to damaged DNA. The UV-DDB complex interacts with monoubiquitinated histone H2A and binds to XPC via the DDB2 subunit. Component of numerous DCX (DDB1-CUL4-X-box) E3 ubiquitin-protein ligase complexes which consist of a core of DDB1, CUL4A or CUL4B and RBX1. DDB1 may recruit specific substrate targeting subunits to the DCX complex. These substrate targeting subunits are generally known as DCAF (DDB1- and CUL4-associated factor) or CDW (CUL4-DDB1-associated WD40-repeat) proteins. Interacts with Fbw5 and gig. May interact with ohgt.

It is found in the cytoplasm. The protein resides in the nucleus. It functions in the pathway protein modification; protein ubiquitination. Protein, which is both involved in DNA repair and protein ubiquitination, as part of the UV-DDB complex and DCX (DDB1-CUL4-X-box) complexes, respectively. Core component of the UV-DDB complex (UV-damaged DNA-binding protein complex), a complex that recognizes UV-induced DNA damage and recruit proteins of the nucleotide excision repair pathway (the NER pathway) to initiate DNA repair. The UV-DDB complex preferentially binds to cyclobutane pyrimidine dimers (CPD), 6-4 photoproducts (6-4 PP), apurinic sites and short mismatches. Also functions as a component of numerous distinct DCX (DDB1-CUL4-X-box) E3 ubiquitin-protein ligase complexes which mediate the ubiquitination and subsequent proteasomal degradation of target proteins. The functional specificity of the DCX E3 ubiquitin-protein ligase complex is determined by the variable substrate recognition component recruited by DDB1. Required for degradation of gig. Required for genomic stability in the face of endogenous DNA lesions and for the response to MMS-induced DNA damage. Required for normal wing development. In Drosophila melanogaster (Fruit fly), this protein is DNA damage-binding protein 1 (pic).